Here is a 656-residue protein sequence, read N- to C-terminus: Heat shock 70 kDa protein, mitochondrial (656 aa).

Residues 1-23 (MFARRLRGAGSLAAASLARWQSS) constitute a mitochondrion transit peptide. Residues 624 to 656 (EYQQAAAGNSSSSSGNTDSSQGEQQQQGDQQKQ) are disordered. Residues 626–656 (QQAAAGNSSSSSGNTDSSQGEQQQQGDQQKQ) show a composition bias toward low complexity.

Belongs to the heat shock protein 70 family.

It localises to the mitochondrion matrix. Its subcellular location is the kinetoplast. Its function is as follows. May participate in eukaryotic mitochondrial DNA replication. The sequence is that of Heat shock 70 kDa protein, mitochondrial (MTP70) from Trypanosoma cruzi.